The sequence spans 360 residues: G-protein coupled receptor 15 (360 aa).

Residues 1–33 (MDPEETSVYLDYYYATSPNPDIRETHSHVPYTS) are Extracellular-facing. The chain crosses the membrane as a helical span at residues 34 to 54 (VFLPVFYIAVFLTGVLGNLVL). Residues 55–69 (MGALHFKPGSRRLID) lie on the Cytoplasmic side of the membrane. The chain crosses the membrane as a helical span at residues 70 to 90 (IFIINLAASDFIFLVTLPLWV). Residues 91 to 120 (DKEASLGLWRTGSFLCKGSSYMISVNMHCS) are Extracellular-facing. A helical transmembrane segment spans residues 121-141 (VFLLTCMSVDRYLAIVCPVVS). The Cytoplasmic portion of the chain corresponds to 142 to 149 (RKFRRTDC). The helical transmembrane segment at 150 to 170 (AYVVCASIWFISCLLGLPTLL) threads the bilayer. Residues 171–192 (SRELTLIDDKPYCAEKKATPLK) lie on the Extracellular side of the membrane. The helical transmembrane segment at 193 to 213 (LIWSLVALIFTFFVPLLSIVT) threads the bilayer. Residues 214–239 (CYCRIARKLCAHYQQSGKHNKKLKKS) lie on the Cytoplasmic side of the membrane. Residues 240–260 (IKIIFIVVAAFLVSWLPFNTS) form a helical membrane-spanning segment. Topologically, residues 261-284 (KLLAIVSGLQQERYFPSAILQLGM) are extracellular. Residues 285 to 305 (EVSGPLAFANSCVNPFIYYIF) traverse the membrane as a helical segment. Residues 306–360 (DSYIRRAIVHCLCPCLKNYDFGSSTETSDSHLTKALSTFIHAEDFTRRRKRSVSL) are Cytoplasmic-facing. At Ser359 the chain carries Phosphoserine.

The protein belongs to the G-protein coupled receptor 1 family. As to quaternary structure, interacts with adapter YWHAE; this interaction promotes ER-to-Golgi transport of GPR15. In terms of processing, phosphorylation is necessary for YWHAE binding and efficient surface expression. O-glycosylated. Sialylated O-glycans in the N-terminal tail inhibits binding of GPR15LG. Post-translationally, sulfation is required for efficient binding of GPR15LG.

It localises to the cell membrane. Functionally, g protein-coupled receptor that plays an important role in immune homeostasis. Acts via its natural ligand GPR15LG, a chemokine-like polypeptide strongly expressed in gastrointestinal tissues. GPR15-GPR15LG signaling axis regulates intestinal homeostasis and inflammation through the migration of immune cells. Controls thereby the specific homing of T-cells, particularly FOXP3+ regulatory T-cells (Tregs), to the large intestine lamina propria. Also required for skin localization of thymus-derived dendritic epidermal T-cells. Plays an important role in mediating cytoprotective function as well as angiogenesis of thrombomodulin. Mechanistically, preferentially signals through the Gi/o pathway to inhibit adenylate cyclase activity and activate a phosphatidylinositol-calcium second messenger system that regulates the release of Ca(2+) ions from intracellular stores. The protein is G-protein coupled receptor 15 (GPR15) of Chlorocebus aethiops (Green monkey).